A 635-amino-acid polypeptide reads, in one-letter code: Glycosyltransferase-like protein gnt13 (635 aa).

The Cytoplasmic segment spans residues 1-18; that stretch reads MNINTLIINFNKVKRMKN. Residues 19 to 38 form a helical; Signal-anchor for type II membrane protein membrane-spanning segment; that stretch reads FLILTLLVVMVVVFLQGPTL. Residues 39–635 lie on the Extracellular side of the membrane; that stretch reads MINNSGQGMG…PNECFSDHHW (597 aa). Asparagine 41 and asparagine 179 each carry an N-linked (GlcNAc...) asparagine glycan. Disordered stretches follow at residues 300 to 358 and 389 to 458; these read NINN…NNID and NIDN…NNEP. A compositionally biased stretch (low complexity) spans 389-456; it reads NIDNNNSNYN…NNNNNNNNNN (68 aa). 2 N-linked (GlcNAc...) asparagine glycosylation sites follow: asparagine 393 and asparagine 535.

This sequence belongs to the glycosyltransferase 8 family. Highly divergent.

Its subcellular location is the membrane. The chain is Glycosyltransferase-like protein gnt13 (gnt13) from Dictyostelium discoideum (Social amoeba).